We begin with the raw amino-acid sequence, 418 residues long: MTYLEIEGTNHLSGNVAISGAKNAALPLIVSSILVKNEVKINNVPNVADIKTLISLLENLGAKVNFQNNNALLNTNTLNQTIAKYDIVRKMRASILTLGPLLARFGHCEVSLPGGCAIGQRPIDLHLLALEKMGANIQIKQGYVVASGNLKGNEILFDKITVTGSENIIMAAALAKGKTKLLNVAKEPEVVQLCEVLKDAGLEIKGIGTDELEIYGTDGELLEFKEFSVIPDRIEAGTYLCAGAITNSKITLDKVNATHLSAVLAKLHQMGFETLITEDSITLLPAKEIKPVEIMTSEHPGFPTDMQAQFMALALKANGTSIIDERLFENRFMHVSELLRMGADIKLNGHIATIVGGKELNAADVMATDLRASSALILAALAAKGTSKVHRIYHLDRGYENLEEKFKGLGVKITRLEE.

22–23 (KN) serves as a coordination point for phosphoenolpyruvate. Residue Arg-92 coordinates UDP-N-acetyl-alpha-D-glucosamine. Catalysis depends on Cys-116, which acts as the Proton donor. A 2-(S-cysteinyl)pyruvic acid O-phosphothioketal modification is found at Cys-116. UDP-N-acetyl-alpha-D-glucosamine contacts are provided by residues 121–125 (RPIDL), Asp-305, and Leu-327.

Belongs to the EPSP synthase family. MurA subfamily.

The protein localises to the cytoplasm. It catalyses the reaction phosphoenolpyruvate + UDP-N-acetyl-alpha-D-glucosamine = UDP-N-acetyl-3-O-(1-carboxyvinyl)-alpha-D-glucosamine + phosphate. Its pathway is cell wall biogenesis; peptidoglycan biosynthesis. Functionally, cell wall formation. Adds enolpyruvyl to UDP-N-acetylglucosamine. This Campylobacter jejuni subsp. doylei (strain ATCC BAA-1458 / RM4099 / 269.97) protein is UDP-N-acetylglucosamine 1-carboxyvinyltransferase.